The chain runs to 325 residues: GMP reductase (325 aa).

The active-site Thioimidate intermediate is C173. 202–225 (IIADGGIRSHGDIAKSVRFGATMV) contributes to the NADP(+) binding site.

It belongs to the IMPDH/GMPR family. GuaC type 2 subfamily.

The catalysed reaction is IMP + NH4(+) + NADP(+) = GMP + NADPH + 2 H(+). In terms of biological role, catalyzes the irreversible NADPH-dependent deamination of GMP to IMP. It functions in the conversion of nucleobase, nucleoside and nucleotide derivatives of G to A nucleotides, and in maintaining the intracellular balance of A and G nucleotides. The sequence is that of GMP reductase from Delftia acidovorans (strain DSM 14801 / SPH-1).